Reading from the N-terminus, the 66-residue chain is Large ribosomal subunit protein bL35 (66 aa).

The span at 1-15 (MSKMKTKSGAKKRFK) shows a compositional bias: basic residues. Positions 1-35 (MSKMKTKSGAKKRFKLTASGKVKAGQAGKRHGMIK) are disordered.

This sequence belongs to the bacterial ribosomal protein bL35 family.

The chain is Large ribosomal subunit protein bL35 from Maricaulis maris (strain MCS10) (Caulobacter maris).